The primary structure comprises 165 residues: Biosynthetic peptidoglycan transglycosylase (165 aa).

It belongs to the glycosyltransferase 51 family.

Its subcellular location is the cell inner membrane. The enzyme catalyses [GlcNAc-(1-&gt;4)-Mur2Ac(oyl-L-Ala-gamma-D-Glu-L-Lys-D-Ala-D-Ala)](n)-di-trans,octa-cis-undecaprenyl diphosphate + beta-D-GlcNAc-(1-&gt;4)-Mur2Ac(oyl-L-Ala-gamma-D-Glu-L-Lys-D-Ala-D-Ala)-di-trans,octa-cis-undecaprenyl diphosphate = [GlcNAc-(1-&gt;4)-Mur2Ac(oyl-L-Ala-gamma-D-Glu-L-Lys-D-Ala-D-Ala)](n+1)-di-trans,octa-cis-undecaprenyl diphosphate + di-trans,octa-cis-undecaprenyl diphosphate + H(+). The protein operates within cell wall biogenesis; peptidoglycan biosynthesis. Peptidoglycan polymerase that catalyzes glycan chain elongation from lipid-linked precursors. This Neisseria meningitidis protein is Biosynthetic peptidoglycan transglycosylase.